The primary structure comprises 143 residues: Large-conductance mechanosensitive channel (143 aa).

The next 2 helical transmembrane spans lie at 16–36 and 84–104; these read VIDL…VTAL and INTV…VKLI.

It belongs to the MscL family. Homopentamer.

It is found in the cell inner membrane. Its function is as follows. Channel that opens in response to stretch forces in the membrane lipid bilayer. May participate in the regulation of osmotic pressure changes within the cell. The protein is Large-conductance mechanosensitive channel of Xanthomonas campestris pv. campestris (strain 8004).